We begin with the raw amino-acid sequence, 341 residues long: Gibberellin 2-beta-dioxygenase 5 (341 aa).

A Fe2OG dioxygenase domain is found at 187–290 (REETCFLRLN…RFSMAFFLCP (104 aa)). Tyr-198 contacts 2-oxoglutarate. Positions 213, 215, and 271 each coordinate Fe cation. Residues Arg-281 and Ser-283 each contribute to the 2-oxoglutarate site.

This sequence belongs to the iron/ascorbate-dependent oxidoreductase family. GA2OX subfamily. The cofactor is L-ascorbate. Requires Fe(2+) as cofactor. As to expression, expressed in roots, leaves, culms, leaf sheaths and young panicles.

It is found in the cytoplasm. The protein resides in the nucleus. The catalysed reaction is gibberellin A1 + 2-oxoglutarate + O2 = gibberellin A8 + succinate + CO2. Its pathway is plant hormone biosynthesis; gibberellin biosynthesis. Functionally, catalyzes the 2-beta-hydroxylation of several biologically active gibberellins (GAs), leading to the homeostatic regulation of their endogenous level. Catabolism of GAs plays a central role in plant development. In vitro, converts GA12 and GA53 to the corresponding 2-beta-hydroxylated products GA110 and GA97, respectively. This is Gibberellin 2-beta-dioxygenase 5 from Oryza sativa subsp. japonica (Rice).